A 1027-amino-acid chain; its full sequence is Transient-receptor-potential-like protein (1027 aa).

The disordered stretch occupies residues 1-22 (MTKEGMLSAAGRRFSRCAPSPR). ANK repeat units lie at residues 85–115 (MGRT…RIGN), 117–141 (LLCA…ITRE), and 163–192 (SDIS…SIEK). 6 helical membrane-spanning segments follow: residues 355–375 (FFLY…YILM), 391–411 (FFYY…ATFE), 473–493 (FLMI…YYIF), 516–536 (VAEA…IYLF), 559–579 (FCFI…QLYW), and 640–660 (MFIM…IAMM). 2 disordered regions span residues 825–929 (KRDI…TYTS) and 1008–1027 (ENVK…NVEK). Positions 855–874 (EESEEDDKSDETSSTDEEAD) are enriched in acidic residues. Over residues 910–923 (RASEADSKLPDRPL) the composition is skewed to basic and acidic residues. The span at 1008-1017 (ENVKSPSPAS) shows a compositional bias: polar residues.

The protein belongs to the transient receptor (TC 1.A.4) family. STrpC subfamily.

It localises to the membrane. Could mediate calcium entry and form a calcium permeant channel. The polypeptide is Transient-receptor-potential-like protein (trp-1) (Caenorhabditis elegans).